Here is a 209-residue protein sequence, read N- to C-terminus: Octanoyltransferase (209 aa).

Residues aspartate 30–lysine 209 enclose the BPL/LPL catalytic domain. Substrate-binding positions include arginine 69–histidine 76, alanine 143–glycine 145, and glycine 156–alanine 158. The active-site Acyl-thioester intermediate is cysteine 174.

It belongs to the LipB family.

The protein localises to the cytoplasm. It catalyses the reaction octanoyl-[ACP] + L-lysyl-[protein] = N(6)-octanoyl-L-lysyl-[protein] + holo-[ACP] + H(+). The protein operates within protein modification; protein lipoylation via endogenous pathway; protein N(6)-(lipoyl)lysine from octanoyl-[acyl-carrier-protein]: step 1/2. Catalyzes the transfer of endogenously produced octanoic acid from octanoyl-acyl-carrier-protein onto the lipoyl domains of lipoate-dependent enzymes. Lipoyl-ACP can also act as a substrate although octanoyl-ACP is likely to be the physiological substrate. This is Octanoyltransferase from Rickettsia peacockii (strain Rustic).